Reading from the N-terminus, the 2273-residue chain is Nonribosomal peptide synthetase hasD (2273 aa).

Residues 100–446 form an adenylation 1 region; it reads FHDQLQKHSS…AGLGLALGYF (347 aa). The 77-residue stretch at 588–664 folds into the Carrier 1 domain; it reads ERGLGAVESV…NIAAAVVELS (77 aa). Serine 625 carries the O-(pantetheine 4'-phosphoryl)serine modification. A condensation 1 region spans residues 696–1120; it reads IAPMTDMQTR…AAQPDTDLSN (425 aa). The tract at residues 1156 to 1487 is adenylation 2; it reads ENSIQAHPDI…SGVQVTPGYL (332 aa). The region spanning 1634 to 1714 is the Carrier 2 domain; that stretch reads DLETDTQRVL…DLSLAIDELV (81 aa). An O-(pantetheine 4'-phosphoryl)serine modification is found at serine 1673. A condensation 2 region spans residues 1735–2127; that stretch reads GQLPLSYLEK…QDLEVDMEYD (393 aa). The segment at 2174-2200 is disordered; sequence PVGLTPSHEGSAELTNGTNKTDSTTGQ. The segment covering 2186–2200 has biased composition (polar residues); it reads ELTNGTNKTDSTTGQ. Residues 2201–2273 form the Carrier 3 domain; that stretch reads QELENNLTDV…LELATCAVII (73 aa). An O-(pantetheine 4'-phosphoryl)serine modification is found at serine 2235.

Belongs to the NRP synthetase family. Pantetheine 4'-phosphate serves as cofactor.

It participates in secondary metabolite biosynthesis. In terms of biological role, nonribosomal peptide synthetase; part of the gene cluster that mediates the biosynthesis of hexadehydro-astechrome (HAS), a tryptophan-derived iron(III)-complex that acts as a virulence factor in infected mice. Within the pathway, the NRPS condenses tryptophan and alanine to produce the Trp-Ala dipeptide. The 7-dimethylallyltryptophan synthase hasE then catalyzes the prenylation of the hasD-tethered tryptophan or the resulting tethered Trp-Ala dipeptide at the C-7 position of the indole moiety. HAS biosynthesis continues via tethered intermediates with the succesive actions of the cytochrome P450 monooxygenase hasH, the O-methyltransferase hasC, and the FAD-linked oxidoreductase hasG. The resulting O-methylated diketopiperazine is then released from hasD. Finally, three O-methylated diketopiperazine molecules assemble in a trimeric complex with Fe(III) to produce hexadehydro-astechrome. This is Nonribosomal peptide synthetase hasD from Aspergillus fumigatus (strain CBS 144.89 / FGSC A1163 / CEA10) (Neosartorya fumigata).